The following is a 187-amino-acid chain: Intermembrane transport lipoprotein PqiC (187 aa).

The first 15 residues, Met1 to Gly15, serve as a signal peptide directing secretion. The N-palmitoyl cysteine moiety is linked to residue Cys16. Residue Cys16 is the site of S-diacylglycerol cysteine attachment.

As to quaternary structure, may form a complex composed of PqiA, PqiB and PqiC. Interacts with PqiB.

The protein localises to the cell outer membrane. Component of a transport pathway that contributes to membrane integrity. The sequence is that of Intermembrane transport lipoprotein PqiC from Escherichia coli (strain K12).